Here is a 292-residue protein sequence, read N- to C-terminus: Trimeric intracellular cation channel type B (292 aa).

Residues 1–16 (MEYPWDDLTLAFSRTS) are Lumenal-facing. A helical membrane pass occupies residues 17-34 (MFPFFDIAHYLVSVMALK). The Cytoplasmic segment spans residues 35 to 47 (QRPGAVAAAWNNP). Residues 48 to 69 (LASWLSAMLHCFGGGILSCMLL) traverse the membrane as a helical segment. The Lumenal portion of the chain corresponds to 70-82 (AESPLKFLTNHTN). The chain crosses the membrane as a helical span at residues 83–100 (ILLASSIWYIVFFCPRDL). The Cytoplasmic portion of the chain corresponds to 101–103 (VSQ). A helical transmembrane segment spans residues 104-122 (GYSYQPIQFLAAGMKEVTR). The a 1,2-diacyl-sn-glycero-3-phospho-(1D-myo-inositol-4,5-bisphosphate) site is built by Lys118 and Arg122. Topologically, residues 123–140 (TWKIVGGVSDANSYYRNA) are lumenal. The helical transmembrane segment at 141–158 (WIVMIVVGWARGAGGAVV) threads the bilayer. Residues 159 to 178 (TACEQLLKGDWKPEGDEWLK) are Cytoplasmic-facing. A helical membrane pass occupies residues 179–195 (MSFPCKITLLGSIMFTF). Residues 196–206 (QHTRHLAISKH) are Lumenal-facing. The chain crosses the membrane as a helical span at residues 207-225 (DLMFLYTIFLVTIKVTMMM). Over 226 to 292 (TKDTAVTLTP…GAKRHAKKED (67 aa)) the chain is Cytoplasmic. The interval 248 to 292 (RQQQQFSSSEKKTEVKPSSNGSASSASKRGAEPSGGAKRHAKKED) is disordered. Over residues 265-274 (SSNGSASSAS) the composition is skewed to low complexity.

It belongs to the TMEM38 family. Homotrimer; conformation seems to be controled by binding to diacylglycerol (DAG). As to expression, widely expressed.

It is found in the endoplasmic reticulum membrane. It catalyses the reaction K(+)(in) = K(+)(out). With respect to regulation, channel activity is activated by increased cytosolic Ca(2+) levels and blocked by luminal high Ca(2+) levels. Functionally, intracellular monovalent cation channel required for maintenance of rapid intracellular calcium release. Acts as a potassium counter-ion channel that functions in synchronization with calcium release from intracellular stores. Activated by increased cytosolic Ca(2+) levels. The chain is Trimeric intracellular cation channel type B (Tmem38b) from Mus musculus (Mouse).